The following is a 121-amino-acid chain: Large ribosomal subunit protein bL19 (121 aa).

It belongs to the bacterial ribosomal protein bL19 family.

Its function is as follows. This protein is located at the 30S-50S ribosomal subunit interface and may play a role in the structure and function of the aminoacyl-tRNA binding site. In Porphyromonas gingivalis (strain ATCC BAA-308 / W83), this protein is Large ribosomal subunit protein bL19.